A 475-amino-acid chain; its full sequence is Ribulose bisphosphate carboxylase large chain (475 aa).

Residues 1 to 2 (MS) constitute a propeptide that is removed on maturation. Proline 3 bears the N-acetylproline mark. The residue at position 14 (lysine 14) is an N6,N6,N6-trimethyllysine. Positions 123 and 173 each coordinate substrate. Residue lysine 175 is the Proton acceptor of the active site. Lysine 177 contacts substrate. Residues lysine 201, aspartate 203, and glutamate 204 each coordinate Mg(2+). Lysine 201 is subject to N6-carboxylysine. The active-site Proton acceptor is the histidine 294. Residues arginine 295, histidine 327, and serine 379 each contribute to the substrate site.

The protein belongs to the RuBisCO large chain family. Type I subfamily. As to quaternary structure, heterohexadecamer of 8 large chains and 8 small chains; disulfide-linked. The disulfide link is formed within the large subunit homodimers. The cofactor is Mg(2+). The disulfide bond which can form in the large chain dimeric partners within the hexadecamer appears to be associated with oxidative stress and protein turnover.

The protein localises to the plastid. It is found in the chloroplast. It carries out the reaction 2 (2R)-3-phosphoglycerate + 2 H(+) = D-ribulose 1,5-bisphosphate + CO2 + H2O. The enzyme catalyses D-ribulose 1,5-bisphosphate + O2 = 2-phosphoglycolate + (2R)-3-phosphoglycerate + 2 H(+). RuBisCO catalyzes two reactions: the carboxylation of D-ribulose 1,5-bisphosphate, the primary event in carbon dioxide fixation, as well as the oxidative fragmentation of the pentose substrate in the photorespiration process. Both reactions occur simultaneously and in competition at the same active site. In Bouvardia ternifolia (Firecrackerbush), this protein is Ribulose bisphosphate carboxylase large chain.